We begin with the raw amino-acid sequence, 340 residues long: Guanine nucleotide-binding protein G(I)/G(S)/G(T) subunit beta-3 (340 aa).

WD repeat units lie at residues G53–D83, L95–N125, A141–D170, G182–D212, G224–D254, S268–D298, and G310–N340.

It belongs to the WD repeat G protein beta family. In terms of assembly, g proteins are composed of 3 units, alpha, beta and gamma. Interacts with RASD2.

Functionally, guanine nucleotide-binding proteins (G proteins) are involved as a modulator or transducer in various transmembrane signaling systems. The beta and gamma chains are required for the GTPase activity, for replacement of GDP by GTP, and for G protein-effector interaction. This chain is Guanine nucleotide-binding protein G(I)/G(S)/G(T) subunit beta-3 (GNB3), found in Homo sapiens (Human).